The chain runs to 224 residues: UPF0758 protein CBUD_1789 (224 aa).

The region spanning 102 to 224 (QLGCTQDAQQ…SFSFAESGLL (123 aa)) is the MPN domain. Zn(2+) is bound by residues histidine 173, histidine 175, and aspartate 186. A JAMM motif motif is present at residues 173-186 (HNHPSGVPDPSQAD).

It belongs to the UPF0758 family.

The chain is UPF0758 protein CBUD_1789 from Coxiella burnetii (strain Dugway 5J108-111).